The primary structure comprises 606 residues: EPM2A-interacting protein 1 (606 aa).

Ser147 bears the Phosphoserine mark.

As to quaternary structure, interacts with EPM2A.

It is found in the endoplasmic reticulum. In Mus musculus (Mouse), this protein is EPM2A-interacting protein 1 (Epm2aip1).